We begin with the raw amino-acid sequence, 274 residues long: uncharacterized protein (274 aa).

This sequence belongs to the class IV-like SAM-binding methyltransferase superfamily. RNA methyltransferase TrmH family.

This is an uncharacterized protein from Synechocystis sp. (strain ATCC 27184 / PCC 6803 / Kazusa).